Here is a 286-residue protein sequence, read N- to C-terminus: Aquaporin PIP1-1 (286 aa).

The interval 1–34 is disordered; it reads MEGKEEDVRLGANKFSERQPIGTAAQSDKGYKEP. Topologically, residues 1–54 are cytoplasmic; that stretch reads MEGKEEDVRLGANKFSERQPIGTAAQSDKGYKEPPPAPLFEPGELTSWSFYRAG. The chain crosses the membrane as a helical span at residues 55–75; that stretch reads IAEFMATFLFLYITILTVMGV. Topologically, residues 76–88 are extracellular; it reads VKSNSKCSTVGIQ. The helical transmembrane segment at 89 to 109 threads the bilayer; sequence GIAWAFGGMIFALVYCTAGIS. Over 110-131 the chain is Cytoplasmic; it reads GGHINPAVTFGLFLARKLSLTR. An NPA 1 motif is present at residues 114–116; that stretch reads NPA. Residues 132 to 152 form a helical membrane-spanning segment; it reads ALFYMVMQCLGAICGAGVVKG. At 153–174 the chain is on the extracellular side; that stretch reads YQKGLYESNGGGANVVAPGYTK. Residues 175–195 traverse the membrane as a helical segment; sequence GDGLGAEIVGTFILVYTVFSA. The Cytoplasmic portion of the chain corresponds to 196–208; it reads TDAKRNARDSHVP. The helical transmembrane segment at 209 to 229 threads the bilayer; it reads ILAPLPIGFAVFLVHLATIPI. The Extracellular portion of the chain corresponds to 230 to 256; it reads TGTGINPARSLGAAIIYNKKHAWDDHW. The NPA 2 motif lies at 235 to 237; the sequence is NPA. The chain crosses the membrane as a helical span at residues 257–277; it reads IFWVGPFIGAALAAIYHQIVI. Residues 278–286 lie on the Cytoplasmic side of the membrane; the sequence is RAIPFKSRP.

It belongs to the MIP/aquaporin (TC 1.A.8) family. PIP (TC 1.A.8.11) subfamily. Expressed in leaves, roots, stems, flowers and fruits, with highest levels in roots.

The protein resides in the cell membrane. Functionally, water channel required to facilitate the transport of water across cell membrane; mercury-insensitive. Promotes primary root elongation and root hair formation. Contributes to the tolerance to multiple abiotic stresses including salt (NaCl), cold and water deprivation, by modulating cytosolic K(+)/Na(+) ratio, maintaining osmotic balance, and reducing membrane injury (e.g. oxidative injury). Also regulates the expression of abscisic acid (ABA)-responsive genes during dehydration and salt stresses. The sequence is that of Aquaporin PIP1-1 from Musa acuminata (Banana).